Consider the following 214-residue polypeptide: Probable nicotinate-nucleotide adenylyltransferase (214 aa).

The protein belongs to the NadD family.

It catalyses the reaction nicotinate beta-D-ribonucleotide + ATP + H(+) = deamido-NAD(+) + diphosphate. It functions in the pathway cofactor biosynthesis; NAD(+) biosynthesis; deamido-NAD(+) from nicotinate D-ribonucleotide: step 1/1. In terms of biological role, catalyzes the reversible adenylation of nicotinate mononucleotide (NaMN) to nicotinic acid adenine dinucleotide (NaAD). The polypeptide is Probable nicotinate-nucleotide adenylyltransferase (Pseudomonas fluorescens (strain ATCC BAA-477 / NRRL B-23932 / Pf-5)).